The chain runs to 83 residues: Apolipoprotein C-I (83 aa).

Positions 1–26 are cleaved as a signal peptide; it reads MRLILSLPVLAVVLAMVLEGPAPAQA.

Belongs to the apolipoprotein C1 family.

It localises to the secreted. Its function is as follows. Inhibitor of lipoprotein binding to the low density lipoprotein (LDL) receptor, LDL receptor-related protein, and very low density lipoprotein (VLDL) receptor. Associates with high density lipoproteins (HDL) and the triacylglycerol-rich lipoproteins in the plasma and makes up about 10% of the protein of the VLDL and 2% of that of HDL. Appears to interfere directly with fatty acid uptake and is also the major plasma inhibitor of cholesteryl ester transfer protein (CETP). Binds free fatty acids and reduces their intracellular esterification. Modulates the interaction of APOE with beta-migrating VLDL and inhibits binding of beta-VLDL to the LDL receptor-related protein. The chain is Apolipoprotein C-I (APOC1) from Rousettus aegyptiacus (Egyptian fruit bat).